We begin with the raw amino-acid sequence, 638 residues long: Pentatricopeptide repeat-containing protein At1g59720, chloroplastic/mitochondrial (638 aa).

A chloroplast and mitochondrion-targeting transit peptide spans M1 to S40. 10 PPR repeats span residues T82–H112, S113–S148, D150–G184, D185–R215, S216–S246, D250–K280, D288–R318, D319–V353, N356–E390, and A392–K422. The interval I427 to N510 is type E motif. The interval G511–R541 is type E(+) motif. The type DYW motif stretch occupies residues S542–W638.

The protein belongs to the PPR family. PCMP-H subfamily. As to quaternary structure, interacts with ORRM1. Interacts with VAR3/OZ1.

It localises to the plastid. The protein localises to the chloroplast. The protein resides in the mitochondrion. Involved in multiple sites RNA editing events in chloroplasts. Involved in the editing of the site 2 of ndhB (ndhB-2) and site 3 of ndhD (ndhD-3) transcripts, which are two plastid-encoded subunits of the chloroplast NAD(P)H dehydrogenase (NDH) complex. Required for the activity of the NDH complex of the photosynthetic electron transport chain. This chain is Pentatricopeptide repeat-containing protein At1g59720, chloroplastic/mitochondrial (PCMP-H51), found in Arabidopsis thaliana (Mouse-ear cress).